The sequence spans 1239 residues: Anillin (1239 aa).

4 disordered regions span residues C32–G67, E230–Q265, F493–G621, and G684–S716. Residues R53–A63 are compositionally biased toward low complexity. The interaction with and bundling of F-actin stretch occupies residues E126–Q371. The span at P252–Q265 shows a compositional bias: basic and acidic residues. The segment covering S500–R518 has biased composition (low complexity). The span at P519–I528 shows a compositional bias: pro residues. Basic and acidic residues predominate over residues E551 to R563. Acidic residues predominate over residues D594–Q610. A compositionally biased stretch (polar residues) spans A699–S716. S712 is subject to Phosphoserine. T740 carries the phosphothreonine modification. Phosphoserine occurs at positions 744 and 754. T831 carries the phosphothreonine modification. The stretch at D834–V861 forms a coiled coil. One can recognise a PH domain in the interval S1106–T1230.

In terms of assembly, interacts with and bundles F-actin. As to expression, accumulates in the ring canals that interconnect cells of the germline cysts in males and the ovarian follicles in females. These structures develop from arrested contractile rings after a specialized cytokinesis in which the closing of the invaginating plasma membrane is incomplete. Also concentrates in the arrested cleavage furrows that initially link the oocyte to its 15 nurse cells in the early egg chamber and is subsequently lost from these furrows as germline cell division is completed.

The protein localises to the nucleus. Its subcellular location is the cytoplasm. The protein resides in the cytoskeleton. It localises to the cell cortex. It is found in the cell projection. The protein localises to the cilium. Its subcellular location is the flagellum. Functionally, required for cytokinesis. Essential for the structural integrity of the cleavage furrow and for completion of cleavage furrow ingression and proper formation of the midbody. Required during cellularization of syncytial embryos for the proper formation and function of the furrow canals, the stable inward folds of the plasma membrane which separate the peripheral nuclei. Also required for the formation of the pole cells, the progenitors of the adult germline which are formed by cytokinesis of the cytoplasmic buds at the posterior pole of the syncytial embryo. Essential for embryonic viability. The chain is Anillin (scra) from Drosophila melanogaster (Fruit fly).